The sequence spans 147 residues: Transcriptional repressor NrdR (147 aa).

A zinc finger spans residues 3–34 (CPFCGHEDTQVAETRESDEGDVIRRRRRCPSC). The 91-residue stretch at 49-139 (PAIVKKDGSR…VYRSFEGVDE (91 aa)) folds into the ATP-cone domain.

The protein belongs to the NrdR family. Requires Zn(2+) as cofactor.

Negatively regulates transcription of bacterial ribonucleotide reductase nrd genes and operons by binding to NrdR-boxes. This is Transcriptional repressor NrdR from Methylibium petroleiphilum (strain ATCC BAA-1232 / LMG 22953 / PM1).